The following is a 789-amino-acid chain: Probable Xaa-Pro aminopeptidase SNOG_02267 (789 aa).

Mn(2+)-binding residues include aspartate 240, aspartate 251, glutamate 375, and glutamate 416. Disordered regions lie at residues 607–658 (SMSK…TGLA) and 670–704 (NHVS…DDAL). The segment covering 622–637 (VISQKQIRNRRSVSST) has biased composition (polar residues). Residues 638-650 (ARHDLRGDRERPQ) are compositionally biased toward basic and acidic residues.

It belongs to the peptidase M24B family. Mn(2+) is required as a cofactor.

It carries out the reaction Release of any N-terminal amino acid, including proline, that is linked to proline, even from a dipeptide or tripeptide.. Its function is as follows. Catalyzes the removal of a penultimate prolyl residue from the N-termini of peptides. This Phaeosphaeria nodorum (strain SN15 / ATCC MYA-4574 / FGSC 10173) (Glume blotch fungus) protein is Probable Xaa-Pro aminopeptidase SNOG_02267.